The following is a 32-amino-acid chain: Potassium channel toxin alpha-KTx 10.2 (32 aa).

Intrachain disulfides connect Cys-3–Cys-22, Cys-8–Cys-12, and Cys-27–Cys-29. Tyr-32 carries the post-translational modification Tyrosine amide.

The protein belongs to the short scorpion toxin superfamily. Potassium channel inhibitor family. Alpha-KTx 10 subfamily. Expressed by the venom gland.

The protein resides in the secreted. Its function is as follows. Blocks Shaker B potassium-channels (Kv1.1/KCNA1 sub-family). This is Potassium channel toxin alpha-KTx 10.2 from Centruroides noxius (Mexican scorpion).